Reading from the N-terminus, the 328-residue chain is Renalase (328 aa).

FAD is bound by residues Ala-13, 32 to 33 (DK), Arg-40, and 56 to 57 (QY). Residues 57–61 (YFTAR) and 96–98 (SPD) contribute to the substrate site. FAD is bound at residue Ile-128. Thr-185 lines the substrate pocket. Asp-302 contacts FAD. Arg-308 provides a ligand contact to substrate. Val-309 serves as a coordination point for FAD.

It belongs to the bacterial renalase family. The cofactor is FAD.

It catalyses the reaction 1,2-dihydro-beta-NAD + O2 + H(+) = H2O2 + NAD(+). It carries out the reaction 1,2-dihydro-beta-NADP + O2 + H(+) = H2O2 + NADP(+). The catalysed reaction is 1,6-dihydro-beta-NADP + O2 + H(+) = H2O2 + NADP(+). The enzyme catalyses 1,6-dihydro-beta-NAD + O2 + H(+) = H2O2 + NAD(+). In terms of biological role, catalyzes the oxidation of the 1,2-dihydro- and 1,6-dihydro- isomeric forms of beta-NAD(P) back to beta-NAD(P)+. Has a preference for 1,2-dihydro-beta-NAD as substrate. May serve to protect primary metabolism dehydrogenases from inhibition by the 1,2-dihydro- and 1,6-dihydro-beta-NAD(P) isomers. This Pseudomonas syringae pv. tomato (strain ATCC BAA-871 / DC3000) protein is Renalase.